The sequence spans 432 residues: Protein ABHD8 (432 aa).

Disordered stretches follow at residues 47 to 69 (KHAG…QGDQ) and 121 to 149 (PAGS…RPKR). Residues 52-61 (APAPTPPPPL) are compositionally biased toward pro residues. The segment covering 139–149 (GRRRRARRPKR) has biased composition (basic residues). Residues 170–272 (VLFFIHGVGG…HKVIMINGGG (103 aa)) enclose the AB hydrolase-1 domain. Catalysis depends on charge relay system residues S245, D363, and H391.

It belongs to the AB hydrolase superfamily. In terms of assembly, interacts with NLRP3 (via NACHT and LLR domains); this interaction is enhanced in the presence of NLRP3 inflammasome inducers, such as ATP, nigericin, silica, or alum. Interacts with ZDHHC12.

It is found in the cytoplasm. Its function is as follows. Negatively regulates NLRP3-driven inflammation. Promotes NLRP3 degradation through the chaperone-mediated autophagy (CMA) pathway, hence attenuating inflammasome activation and IL1B secretion. Acts by recruiting palmitoyltransferase ZDHHC12 to NLRP3, facilitating NLRP3 palmitoylation and subsequent degradation. In Bos taurus (Bovine), this protein is Protein ABHD8.